A 130-amino-acid chain; its full sequence is MRKNSVKNTRINGEVLKELSNIIRSEIKDPRINPMTSVVAVEVAPDLKTCKAYISVLGDEKSQKDTITGLKSAEGYIRRQLARTVNLRNTPEIRFILDQSIEYGINMSKLIDEVTEHDNKMHVEVEDETE.

This sequence belongs to the RbfA family. Monomer. Binds 30S ribosomal subunits, but not 50S ribosomal subunits or 70S ribosomes.

It localises to the cytoplasm. One of several proteins that assist in the late maturation steps of the functional core of the 30S ribosomal subunit. Associates with free 30S ribosomal subunits (but not with 30S subunits that are part of 70S ribosomes or polysomes). Required for efficient processing of 16S rRNA. May interact with the 5'-terminal helix region of 16S rRNA. The chain is Ribosome-binding factor A from Lachnospira eligens (strain ATCC 27750 / DSM 3376 / VPI C15-48 / C15-B4) (Eubacterium eligens).